A 424-amino-acid chain; its full sequence is Inositol phosphosphingolipids phospholipase C (424 aa).

Glu49 contributes to the Mg(2+) binding site. Residue His289 is the Proton acceptor of the active site. The next 2 helical transmembrane spans lie at 335–357 (LRIAHLLISIPLIIGVHVAIAWC) and 364–386 (VIILFFTVMLTIAAVVNGFCIGL).

This sequence belongs to the neutral sphingomyelinase family. It depends on Mg(2+) as a cofactor.

It localises to the cell membrane. It is found in the endoplasmic reticulum membrane. The protein operates within lipid metabolism; sphingolipid metabolism. In terms of biological role, inositol phosphosphingolipids phospholipase essential for the coordination of cell wall formation. Responsible for the hydrolysis of the phosphosphingolipids (IPS), inositol phosphorylceramide (IPC), mannosylinositol phosphorylceramide (MIPC), and mannosyldiinositol phosphorylceramide (M(IP)2C). This Schizosaccharomyces pombe (strain 972 / ATCC 24843) (Fission yeast) protein is Inositol phosphosphingolipids phospholipase C (css1).